Consider the following 436-residue polypeptide: MTILALGINHKTASVNLRSKVAFDDQKRQLAFEQIQHRALAESVVILSTCNRTELYFHNAEITPREEHEDNIAWREQCFEWFAEIHQLEHNELRECIYFKQNMEAARHLMRVACGLDSLILGEPQILGQVKQAYQYSENFYQSQNSHISTKLSRLFQRTFSTAKRVRSETEIGSSAVSVAYAACGLARQIFDNFGKLRFLLVGAGETIELVARYLIQHGAKNIMIANRTPQRAETLAERLNTPMQILSLSALQIGLNQADIVISSTGSPDMLISKEMVEIAQKQRQFDPMLLIDIAVPRDIDENAGELDAVYSYSVDDLQHIIQRNMAQREQAAEQAAQIVDEECKAFFEWLKQQQSSDLIKRYRQDAEQTRQELLAKALVALTSGQDSEKVLNELSYKLTNSLLHVPTQALQAMAKSGNSQGLQSFSKALKLEEQ.

Residues 49-52 (TCNR), Ser-118, 123-125 (EPQ), and Gln-129 contribute to the substrate site. Cys-50 (nucleophile) is an active-site residue. 203–208 (GAGETI) contacts NADP(+).

This sequence belongs to the glutamyl-tRNA reductase family. Homodimer.

The catalysed reaction is (S)-4-amino-5-oxopentanoate + tRNA(Glu) + NADP(+) = L-glutamyl-tRNA(Glu) + NADPH + H(+). It functions in the pathway porphyrin-containing compound metabolism; protoporphyrin-IX biosynthesis; 5-aminolevulinate from L-glutamyl-tRNA(Glu): step 1/2. Its function is as follows. Catalyzes the NADPH-dependent reduction of glutamyl-tRNA(Glu) to glutamate 1-semialdehyde (GSA). The sequence is that of Glutamyl-tRNA reductase from Actinobacillus pleuropneumoniae serotype 7 (strain AP76).